A 193-amino-acid chain; its full sequence is Large ribosomal subunit protein eL18 (193 aa).

The interval 158–193 (HFGAAGVPGSHAKPFTSNRGKERQRSSARRRAFRHK) is disordered. Positions 183-193 (SSARRRAFRHK) are enriched in basic residues.

This sequence belongs to the eukaryotic ribosomal protein eL18 family.

It is found in the cytoplasm. This chain is Large ribosomal subunit protein eL18 (RPL18), found in Trypanosoma cruzi (strain CL Brener).